A 362-amino-acid polypeptide reads, in one-letter code: Aminomethyltransferase (362 aa).

It belongs to the GcvT family. As to quaternary structure, the glycine cleavage system is composed of four proteins: P, T, L and H.

It catalyses the reaction N(6)-[(R)-S(8)-aminomethyldihydrolipoyl]-L-lysyl-[protein] + (6S)-5,6,7,8-tetrahydrofolate = N(6)-[(R)-dihydrolipoyl]-L-lysyl-[protein] + (6R)-5,10-methylene-5,6,7,8-tetrahydrofolate + NH4(+). Its function is as follows. The glycine cleavage system catalyzes the degradation of glycine. The protein is Aminomethyltransferase of Listeria monocytogenes serotype 4b (strain F2365).